A 549-amino-acid polypeptide reads, in one-letter code: Longitudinals lacking protein, isoforms H/M/V (549 aa).

The region spanning V32–Q97 is the BTB domain. 2 disordered regions span residues L115–L200 and S228–S340. Low complexity-rich tracts occupy residues S162–P175, S228–T251, T263–S293, and N329–S340.

As to expression, mostly neuronal.

The protein localises to the nucleus. Functionally, putative transcription factor required for axon growth and guidance in the central and peripheral nervous systems. Repels CNS axons away from the midline by promoting the expression of the midline repellent sli and its receptor robo. The polypeptide is Longitudinals lacking protein, isoforms H/M/V (Drosophila melanogaster (Fruit fly)).